The sequence spans 197 residues: Protein GrpE (197 aa).

The disordered stretch occupies residues 1–40 (MSSKEQKTPEGQAPEEIIMDRHEEIEAVEPEASAEQVDPR).

This sequence belongs to the GrpE family. Homodimer.

It is found in the cytoplasm. Functionally, participates actively in the response to hyperosmotic and heat shock by preventing the aggregation of stress-denatured proteins, in association with DnaK and GrpE. It is the nucleotide exchange factor for DnaK and may function as a thermosensor. Unfolded proteins bind initially to DnaJ; upon interaction with the DnaJ-bound protein, DnaK hydrolyzes its bound ATP, resulting in the formation of a stable complex. GrpE releases ADP from DnaK; ATP binding to DnaK triggers the release of the substrate protein, thus completing the reaction cycle. Several rounds of ATP-dependent interactions between DnaJ, DnaK and GrpE are required for fully efficient folding. This is Protein GrpE from Shigella flexneri serotype 5b (strain 8401).